The following is a 417-amino-acid chain: Serine hydroxymethyltransferase (417 aa).

Residues Leu-121 and 125–127 (GHL) each bind (6S)-5,6,7,8-tetrahydrofolate. Lys-229 is subject to N6-(pyridoxal phosphate)lysine. (6S)-5,6,7,8-tetrahydrofolate is bound at residue 355 to 357 (SPF).

Belongs to the SHMT family. Homodimer. Pyridoxal 5'-phosphate serves as cofactor.

It is found in the cytoplasm. The enzyme catalyses (6R)-5,10-methylene-5,6,7,8-tetrahydrofolate + glycine + H2O = (6S)-5,6,7,8-tetrahydrofolate + L-serine. Its pathway is one-carbon metabolism; tetrahydrofolate interconversion. It participates in amino-acid biosynthesis; glycine biosynthesis; glycine from L-serine: step 1/1. Catalyzes the reversible interconversion of serine and glycine with tetrahydrofolate (THF) serving as the one-carbon carrier. This reaction serves as the major source of one-carbon groups required for the biosynthesis of purines, thymidylate, methionine, and other important biomolecules. Also exhibits THF-independent aldolase activity toward beta-hydroxyamino acids, producing glycine and aldehydes, via a retro-aldol mechanism. This is Serine hydroxymethyltransferase from Klebsiella pneumoniae subsp. pneumoniae (strain ATCC 700721 / MGH 78578).